The sequence spans 410 residues: Peptidase T (410 aa).

Residue histidine 79 participates in Zn(2+) binding. Residue aspartate 81 is part of the active site. Residue aspartate 142 coordinates Zn(2+). Residue glutamate 176 is the Proton acceptor of the active site. Glutamate 177, aspartate 199, and histidine 381 together coordinate Zn(2+).

Belongs to the peptidase M20B family. It depends on Zn(2+) as a cofactor.

Its subcellular location is the cytoplasm. It carries out the reaction Release of the N-terminal residue from a tripeptide.. Functionally, cleaves the N-terminal amino acid of tripeptides. The polypeptide is Peptidase T (Bacillus thuringiensis subsp. konkukian (strain 97-27)).